A 108-amino-acid chain; its full sequence is Thiosulfate sulfurtransferase GlpE (108 aa).

A Rhodanese domain is found at 18-106 (ENEGATLADI…WERSGLPIET (89 aa)). The Cysteine persulfide intermediate role is filled by C66.

This sequence belongs to the GlpE family.

It is found in the cytoplasm. The enzyme catalyses thiosulfate + hydrogen cyanide = thiocyanate + sulfite + 2 H(+). It catalyses the reaction thiosulfate + [thioredoxin]-dithiol = [thioredoxin]-disulfide + hydrogen sulfide + sulfite + 2 H(+). Transferase that catalyzes the transfer of sulfur from thiosulfate to thiophilic acceptors such as cyanide or dithiols. May function in a CysM-independent thiosulfate assimilation pathway by catalyzing the conversion of thiosulfate to sulfite, which can then be used for L-cysteine biosynthesis. The protein is Thiosulfate sulfurtransferase GlpE of Actinobacillus pleuropneumoniae serotype 7 (strain AP76).